A 622-amino-acid chain; its full sequence is Carbon monoxide dehydrogenase (622 aa).

5 residues coordinate [4Fe-4S] cluster: Cys40, Cys49, Cys52, Cys57, and Cys68. [Ni-4Fe-5S] cluster is bound by residues His256, Cys334, Cys442, Cys473, and Cys514.

It belongs to the Ni-containing carbon monoxide dehydrogenase family. As to quaternary structure, homodimer. [4Fe-4S] cluster serves as cofactor. Requires [Ni-4Fe-5S] cluster as cofactor.

It catalyses the reaction CO + 2 oxidized [2Fe-2S]-[ferredoxin] + H2O = 2 reduced [2Fe-2S]-[ferredoxin] + CO2 + 2 H(+). CODH oxidizes carbon monoxide coupled, via CooF, to the reduction of a hydrogen cation by a hydrogenase (possibly CooH). This Archaeoglobus fulgidus (strain ATCC 49558 / DSM 4304 / JCM 9628 / NBRC 100126 / VC-16) protein is Carbon monoxide dehydrogenase (cooS).